The sequence spans 839 residues: Autophagy-related protein 9A (839 aa).

A disordered region spans residues 1–20; it reads MAQFDTEYQRLEASYSDSPP. At alanine 2 the chain carries N-acetylalanine. Over 2–61 the chain is Cytoplasmic; sequence AQFDTEYQRLEASYSDSPPGEEDLLVHVAEGSKSPWHHIENLDLFFSRVYNLHQKNGFTC. Residues 8–11 carry the Tyrosine-based sorting signal motif; it reads YQRL. Serine 14, serine 16, and serine 18 each carry phosphoserine. The chain crosses the membrane as a helical span at residues 62-84; that stretch reads MLIGEIFELMQFLFVVAFTTFLV. The Lumenal portion of the chain corresponds to 85–128; sequence SCVDYDILFANKMVNHSLHPTEPVKVTLPDAFLPAQVCSARIQE. N-linked (GlcNAc...) asparagine glycosylation is present at asparagine 99. A helical transmembrane segment spans residues 129–154; it reads NGSLITILVIAGVFWIHRLIKFIYNI. The Cytoplasmic portion of the chain corresponds to 155–290; sequence CCYWEIHSFY…ELAQRLSNRI (136 aa). The stretch at 291–301 is an intramembrane region; sequence LWIGIANFLLC. The Cytoplasmic portion of the chain corresponds to 302–319; the sequence is PLILIWQILYAFFSYAEV. The stretch at 320–328 is an intramembrane region; sequence LKREPGALG. Residues 329 to 371 lie on the Cytoplasmic side of the membrane; it reads ARCWSLYGRCYLRHFNELEHELQSRLNRGYKPASKYMNCFLSP. A helical transmembrane segment spans residues 372–397; it reads LLTLLAKNGAFFAGSILAVLIALTIY. The Lumenal segment spans residues 398-406; that stretch reads DEDVLAVEH. A helical membrane pass occupies residues 407–424; it reads VLTTVTLLGVTVTVCRSF. Topologically, residues 425-470 are cytoplasmic; the sequence is IPDQHMVFCPEQLLRVILAHIHYMPDHWQGNAHRSQTRDEFAQLFQ. The stretch at 471-480 is an intramembrane region; sequence YKAVFILEEL. Residues 481–483 lie on the Cytoplasmic side of the membrane; the sequence is LSP. The stretch at 484–492 is an intramembrane region; it reads IVTPLILIF. At 493 to 839 the chain is on the cytoplasmic side; sequence CLRPRALEII…DELPPQVHKV (347 aa). 5 positions are modified to phosphoserine: serine 656, serine 735, serine 738, serine 741, and serine 828. Disordered regions lie at residues 656–686 and 719–839; these read SPLQPGQAPTGRAHSTMTGSGVDARTASSGS and QQAQ…VHKV. The span at 724 to 736 shows a compositional bias: basic and acidic residues; sequence EPERHLWHRRESD. Acidic residues-rich tracts occupy residues 737–747 and 823–832; these read ESGESAPDEGG and VPEEGSEDEL.

Belongs to the ATG9 family. As to quaternary structure, homotrimer; forms a homotrimer with a central pore that forms a path between the two membrane leaflets. Interacts (via cytoplasmic its C-terminus) with ATG2A. Interacts with SUPT20H. Interacts (via the tyrosine-based sorting signal motif) with AP4M1; promoting association with the AP-4 complex. Interacts with ARFIP1 and ARFIP2. Interacts with PI4K2A and PI4KB. Interacts with ATG4A; the interaction is direct and promotes ATG9A trafficking. Ufmylated in a DDRGK1 dependent manner.

Its subcellular location is the preautophagosomal structure membrane. The protein resides in the cytoplasmic vesicle. It localises to the autophagosome membrane. It is found in the golgi apparatus. The protein localises to the trans-Golgi network membrane. Its subcellular location is the late endosome membrane. The protein resides in the recycling endosome membrane. It localises to the endoplasmic reticulum membrane. It is found in the mitochondrion membrane. It carries out the reaction a 1,2-diacyl-sn-glycero-3-phosphocholine(in) = a 1,2-diacyl-sn-glycero-3-phosphocholine(out). The catalysed reaction is a 1,2-diacyl-sn-glycero-3-phospho-L-serine(in) = a 1,2-diacyl-sn-glycero-3-phospho-L-serine(out). It catalyses the reaction a 1,2-diacyl-sn-glycero-3-phosphoethanolamine(in) = a 1,2-diacyl-sn-glycero-3-phosphoethanolamine(out). Functionally, phospholipid scramblase involved in autophagy by mediating autophagosomal membrane expansion. Cycles between the preautophagosomal structure/phagophore assembly site (PAS) and the cytoplasmic vesicle pool and supplies membrane for the growing autophagosome. Lipid scramblase activity plays a key role in preautophagosomal structure/phagophore assembly by distributing the phospholipids that arrive through ATG2 (ATG2A or ATG2B) from the cytoplasmic to the luminal leaflet of the bilayer, thereby driving autophagosomal membrane expansion. Also required to supply phosphatidylinositol 4-phosphate to the autophagosome initiation site by recruiting the phosphatidylinositol 4-kinase beta (PI4KB) in a process dependent on ARFIP2, but not ARFIP1. In addition to autophagy, also plays a role in necrotic cell death. This is Autophagy-related protein 9A from Pongo abelii (Sumatran orangutan).